We begin with the raw amino-acid sequence, 147 residues long: Small ribosomal subunit protein bS16 (147 aa).

The disordered stretch occupies residues 89 to 147 (AWTHGNNPKKAEPGKKAQERAKERADKAEAKAAAAAEAAAAPAEEAPAEAAPAEETSES). Positions 97–118 (KKAEPGKKAQERAKERADKAEA) are enriched in basic and acidic residues. Low complexity predominate over residues 119–147 (KAAAAAEAAAAPAEEAPAEAAPAEETSES).

This sequence belongs to the bacterial ribosomal protein bS16 family.

In Hyphomonas neptunium (strain ATCC 15444), this protein is Small ribosomal subunit protein bS16.